The chain runs to 111 residues: Small ubiquitin-related modifier 3 (111 aa).

In terms of domain architecture, Ubiquitin-like spans 16-93; that stretch reads AHVILKVKSQ…IDACRAMSGG (78 aa). A Glycyl lysine isopeptide (Gly-Lys) (interchain with K-? in acceptor proteins) cross-link involves residue Gly-93.

This sequence belongs to the ubiquitin family. SUMO subfamily. In terms of assembly, interacts with SAE2, SCE1, SIZ1 and MMS21. Covalently attached to a number of proteins. Interacts with NPR1; this interaction promotes NPR1 phosphorylation and triggers its sumoylation and subsequent degradation.

It localises to the nucleus. The protein localises to the cytoplasm. In terms of biological role, ubiquitin-like protein which can be covalently attached to target lysines as a monomer. Does not seem to be involved in protein degradation and may function as an antagonist of ubiquitin in the degradation process. Promotes NPR1 sumoylation to activate defense gene expression and regulate its degradation. The protein is Small ubiquitin-related modifier 3 of Arabidopsis thaliana (Mouse-ear cress).